The chain runs to 158 residues: Lipoprotein signal peptidase (158 aa).

4 consecutive transmembrane segments (helical) span residues L7–V27, L38–L58, L68–L88, and L92–G112. Residues D116 and D132 contribute to the active site. The chain crosses the membrane as a helical span at residues F125–A145.

This sequence belongs to the peptidase A8 family.

It is found in the cell inner membrane. It catalyses the reaction Release of signal peptides from bacterial membrane prolipoproteins. Hydrolyzes -Xaa-Yaa-Zaa-|-(S,diacylglyceryl)Cys-, in which Xaa is hydrophobic (preferably Leu), and Yaa (Ala or Ser) and Zaa (Gly or Ala) have small, neutral side chains.. The protein operates within protein modification; lipoprotein biosynthesis (signal peptide cleavage). In terms of biological role, this protein specifically catalyzes the removal of signal peptides from prolipoproteins. The sequence is that of Lipoprotein signal peptidase from Nostoc punctiforme (strain ATCC 29133 / PCC 73102).